Consider the following 214-residue polypeptide: Adenylate kinase (214 aa).

An ATP-binding site is contributed by 10–15; it reads GAGKGT. The interval 30–59 is NMP; the sequence is STGDMLRAAIKAGTELGLNAKAVMDAGQLV. Residues Thr31, Arg36, 57-59, 85-88, and Gln92 each bind AMP; these read QLV and GFPR. An LID region spans residues 122 to 159; it reads GRRVHSGSGRTYHVVFNPPKVEGKDDVTGEDLVIRADD. Residues Arg123 and 132-133 contribute to the ATP site; that span reads TY. The AMP site is built by Arg156 and Arg167. Gln200 contacts ATP.

This sequence belongs to the adenylate kinase family. In terms of assembly, monomer.

Its subcellular location is the cytoplasm. It catalyses the reaction AMP + ATP = 2 ADP. It participates in purine metabolism; AMP biosynthesis via salvage pathway; AMP from ADP: step 1/1. Functionally, catalyzes the reversible transfer of the terminal phosphate group between ATP and AMP. Plays an important role in cellular energy homeostasis and in adenine nucleotide metabolism. The polypeptide is Adenylate kinase (Aeromonas salmonicida (strain A449)).